The sequence spans 168 residues: Lipoprotein signal peptidase (168 aa).

Transmembrane regions (helical) follow at residues 8–28 (LYYL…WLVV), 61–81 (GQFW…VIYI), and 91–111 (FGIA…DRIF). Residues D117 and D135 contribute to the active site. Residues 128 to 148 (FPIFNVADAALTIGVALMFIY) form a helical membrane-spanning segment.

It belongs to the peptidase A8 family.

The protein localises to the cell membrane. The catalysed reaction is Release of signal peptides from bacterial membrane prolipoproteins. Hydrolyzes -Xaa-Yaa-Zaa-|-(S,diacylglyceryl)Cys-, in which Xaa is hydrophobic (preferably Leu), and Yaa (Ala or Ser) and Zaa (Gly or Ala) have small, neutral side chains.. The protein operates within protein modification; lipoprotein biosynthesis (signal peptide cleavage). Its function is as follows. This protein specifically catalyzes the removal of signal peptides from prolipoproteins. The polypeptide is Lipoprotein signal peptidase (Anoxybacillus flavithermus (strain DSM 21510 / WK1)).